A 362-amino-acid chain; its full sequence is Cobalt-precorrin-5B C(1)-methyltransferase (362 aa).

This sequence belongs to the CbiD family.

The enzyme catalyses Co-precorrin-5B + S-adenosyl-L-methionine = Co-precorrin-6A + S-adenosyl-L-homocysteine. It functions in the pathway cofactor biosynthesis; adenosylcobalamin biosynthesis; cob(II)yrinate a,c-diamide from sirohydrochlorin (anaerobic route): step 6/10. Functionally, catalyzes the methylation of C-1 in cobalt-precorrin-5B to form cobalt-precorrin-6A. The polypeptide is Cobalt-precorrin-5B C(1)-methyltransferase (Geotalea daltonii (strain DSM 22248 / JCM 15807 / FRC-32) (Geobacter daltonii)).